The sequence spans 392 residues: UDP-N-acetylglucosamine--N-acetylmuramyl-(pentapeptide) pyrophosphoryl-undecaprenol N-acetylglucosamine transferase (392 aa).

Residues 14–16 (TGG), N124, R167, S195, I251, and Q296 contribute to the UDP-N-acetyl-alpha-D-glucosamine site.

It belongs to the glycosyltransferase 28 family. MurG subfamily.

The protein resides in the cell inner membrane. It carries out the reaction di-trans,octa-cis-undecaprenyl diphospho-N-acetyl-alpha-D-muramoyl-L-alanyl-D-glutamyl-meso-2,6-diaminopimeloyl-D-alanyl-D-alanine + UDP-N-acetyl-alpha-D-glucosamine = di-trans,octa-cis-undecaprenyl diphospho-[N-acetyl-alpha-D-glucosaminyl-(1-&gt;4)]-N-acetyl-alpha-D-muramoyl-L-alanyl-D-glutamyl-meso-2,6-diaminopimeloyl-D-alanyl-D-alanine + UDP + H(+). The protein operates within cell wall biogenesis; peptidoglycan biosynthesis. In terms of biological role, cell wall formation. Catalyzes the transfer of a GlcNAc subunit on undecaprenyl-pyrophosphoryl-MurNAc-pentapeptide (lipid intermediate I) to form undecaprenyl-pyrophosphoryl-MurNAc-(pentapeptide)GlcNAc (lipid intermediate II). In Sphingopyxis alaskensis (strain DSM 13593 / LMG 18877 / RB2256) (Sphingomonas alaskensis), this protein is UDP-N-acetylglucosamine--N-acetylmuramyl-(pentapeptide) pyrophosphoryl-undecaprenol N-acetylglucosamine transferase.